The primary structure comprises 92 residues: Small ribosomal subunit protein uS19 (92 aa).

This sequence belongs to the universal ribosomal protein uS19 family.

Its function is as follows. Protein S19 forms a complex with S13 that binds strongly to the 16S ribosomal RNA. The protein is Small ribosomal subunit protein uS19 of Corynebacterium efficiens (strain DSM 44549 / YS-314 / AJ 12310 / JCM 11189 / NBRC 100395).